A 1004-amino-acid polypeptide reads, in one-letter code: Receptor-type tyrosine-protein phosphatase N2 (1004 aa).

An N-terminal signal peptide occupies residues 1–27; sequence MGLPLPLLLLLLLPPPLPRALPAPASA. Residues 1–409 form an involved in localization to secretory granules; interaction with CPE region; that stretch reads MGLPLPLLLL…PEAPLLEKSS (409 aa). Topologically, residues 28–603 are extracellular; the sequence is RGRQLPGRLG…HPEEQEDSTK (576 aa). Arginine 259 carries the omega-N-methylarginine modification. 3 disordered regions span residues 274-294, 333-360, and 393-459; these read APAL…SLSM, QSDP…DAPE, and DHGS…WRLE. Serine 340 is subject to Phosphoserine. Basic and acidic residues-rich tracts occupy residues 341–356 and 407–418; these read QESH…REQA and KSSRAEMKKSEQ. A compositionally biased stretch (acidic residues) spans 419-430; the sequence is PEEVLSSEEETA. A phosphoserine mark is found at serine 424 and serine 425. Over residues 431 to 450 the composition is skewed to basic and acidic residues; sequence GVEHVKSRTYSKDLLERKPN. N-linked (GlcNAc...) asparagine glycosylation occurs at asparagine 553. Residues 604-624 traverse the membrane as a helical segment; it reads FIVLTFLSIACILAVLLASSL. The Cytoplasmic segment spans residues 625–1004; that stretch reads AYCLRHNSHY…VNAILKALPQ (380 aa). Positions 655-664 match the Tyrosine-based internalization motif motif; that stretch reads YQELCRQRMA. The segment at 665-710 is disordered; it reads VRPQDHSEGPHTSRINSVSSQLSDGPMPSPSARSSTSSWSEEPAQS. The segment covering 677-687 has biased composition (polar residues); sequence SRINSVSSQLS. The residue at position 681 (serine 681) is a Phosphoserine; by PKA. Serine 687 carries the phosphoserine modification. Residues 694 to 710 are compositionally biased toward low complexity; the sequence is PSARSSTSSWSEEPAQS. A Phosphothreonine; by PKA modification is found at threonine 700. The Tyrosine-protein phosphatase domain maps to 734-994; it reads LEKEWEALCA…EFALTAVAEE (261 aa). Residues aspartate 902 and 934 to 940 contribute to the substrate site; that span reads CSDGAGR. Residue cysteine 934 is the Phosphocysteine intermediate of the active site. The residue at position 959 (lysine 959) is an N6-acetyllysine. Glutamine 979 contributes to the substrate binding site. Residues 993–999 carry the Leucine-based sorting signal motif; that stretch reads EEVNAIL.

Belongs to the protein-tyrosine phosphatase family. Receptor class 8 subfamily. As to quaternary structure, self-associates. Interacts (via cytoplasmic domain) with PTPRN (via cytoplasmic domain). Interacts (precursor form) with CPE. Interacts with HAP1. Interacts with AP2A1 or AP2A2 and AP1G1; indicative for an association with adaptor protein complex 2 (AP-2) and adaptor protein complex 1 (AP-1). Interacts with AP2M1; indicative for an association with adaptor protein complex 2 (AP-2). Interacts with MYO5A. Post-translationally, subject to proteolytic cleavage at multiple sites.

The protein resides in the cytoplasmic vesicle. Its subcellular location is the secretory vesicle membrane. It localises to the secretory vesicle. It is found in the synaptic vesicle membrane. It carries out the reaction O-phospho-L-tyrosyl-[protein] + H2O = L-tyrosyl-[protein] + phosphate. Functionally, plays a role in vesicle-mediated secretory processes. Required for normal accumulation of secretory vesicles in hippocampus, pituitary and pancreatic islets. Required for the accumulation of normal levels of insulin-containing vesicles and preventing their degradation. Plays a role in insulin secretion in response to glucose stimuli. Required for normal accumulation of the neurotransmitters norepinephrine, dopamine and serotonin in the brain. In females, but not in males, required for normal accumulation and secretion of pituitary hormones, such as luteinizing hormone (LH) and follicle-stimulating hormone (FSH). Required to maintain normal levels of renin expression and renin release. May regulate catalytic active protein-tyrosine phosphatases such as PTPRA through dimerization. Has phosphatidylinositol phosphatase activity; the PIPase activity is involved in its ability to regulate insulin secretion. Can dephosphorylate phosphatidylinositol 4,5-biphosphate, phosphatidylinositol 5-phosphate and phosphatidylinositol 3-phosphate. Regulates PI(4,5)P2 level in the plasma membrane and localization of cofilin at the plasma membrane and thus is indirectly involved in regulation of actin dynamics related to cell migration and metastasis; upon hydrolysis of PI(4,5)P2 cofilin is released from the plasma membrane and acts in the cytoplasm in severing F-actin filaments. The sequence is that of Receptor-type tyrosine-protein phosphatase N2 (Ptprn2) from Rattus norvegicus (Rat).